A 1260-amino-acid polypeptide reads, in one-letter code: uncharacterized protein (1260 aa).

The protein belongs to the oxoprolinase family.

This is an uncharacterized protein from Schizosaccharomyces pombe (strain 972 / ATCC 24843) (Fission yeast).